A 938-amino-acid polypeptide reads, in one-letter code: Translation initiation factor IF-2 (938 aa).

Positions lysine 55–glutamate 322 are disordered. Composition is skewed to low complexity over residues glutamate 57–lysine 68 and lysine 77–proline 117. Residues lysine 118 to proline 136 show a composition bias toward pro residues. Low complexity-rich tracts occupy residues alanine 141–alanine 153, glycine 180–asparagine 198, and methionine 224–glycine 233. A compositionally biased stretch (gly residues) spans proline 247–glycine 293. The span at arginine 310–arginine 319 shows a compositional bias: basic residues. In terms of domain architecture, tr-type G spans alanine 431–aspartate 603. The tract at residues glycine 440–threonine 447 is G1. Glycine 440–threonine 447 lines the GTP pocket. The segment at glycine 465–histidine 469 is G2. Residues aspartate 490–glycine 493 form a G3 region. GTP is bound by residues aspartate 490 to histidine 494 and asparagine 544 to aspartate 547. Positions asparagine 544–aspartate 547 are G4. The interval serine 580 to lysine 582 is G5.

This sequence belongs to the TRAFAC class translation factor GTPase superfamily. Classic translation factor GTPase family. IF-2 subfamily.

It localises to the cytoplasm. Its function is as follows. One of the essential components for the initiation of protein synthesis. Protects formylmethionyl-tRNA from spontaneous hydrolysis and promotes its binding to the 30S ribosomal subunits. Also involved in the hydrolysis of GTP during the formation of the 70S ribosomal complex. In Nocardioides sp. (strain ATCC BAA-499 / JS614), this protein is Translation initiation factor IF-2.